The following is a 366-amino-acid chain: NADH-quinone oxidoreductase subunit D (366 aa).

It belongs to the complex I 49 kDa subunit family. NDH-1 is composed of 14 different subunits. Subunits NuoB, C, D, E, F, and G constitute the peripheral sector of the complex.

The protein localises to the cell membrane. The catalysed reaction is a quinone + NADH + 5 H(+)(in) = a quinol + NAD(+) + 4 H(+)(out). Its function is as follows. NDH-1 shuttles electrons from NADH, via FMN and iron-sulfur (Fe-S) centers, to quinones in the respiratory chain. The immediate electron acceptor for the enzyme in this species is believed to be a menaquinone. Couples the redox reaction to proton translocation (for every two electrons transferred, four hydrogen ions are translocated across the cytoplasmic membrane), and thus conserves the redox energy in a proton gradient. The protein is NADH-quinone oxidoreductase subunit D of Bacillus cereus (strain ATCC 14579 / DSM 31 / CCUG 7414 / JCM 2152 / NBRC 15305 / NCIMB 9373 / NCTC 2599 / NRRL B-3711).